The chain runs to 996 residues: Cilia- and flagella-associated protein 251 (996 aa).

11 WD repeats span residues 73-114, 118-164, 168-211, 219-258, 282-319, 399-438, 445-485, 494-533, 547-593, 615-658, and 719-759; these read GHCN…PKKT, PHPN…EPCL, EFDR…KGFN, PSLK…EKVD, KGSN…IAWF, SIVS…SVLS, TDKE…WQNS, QGKP…FDVN, IHHS…YSKQ, EQET…FKFC, and AHPD…LEQI. The disordered stretch occupies residues 971-996; the sequence is DLEGEERDDNIEDQYEDEENEEYDQD.

It localises to the cell projection. The protein localises to the cilium. In terms of biological role, as component of a spoke-associated complex, regulates ciliary mobility by mediating a stable and functional assembly of the radial spoke 3 (RS3). The polypeptide is Cilia- and flagella-associated protein 251 (Tetrahymena thermophila (strain SB210)).